Here is a 292-residue protein sequence, read N- to C-terminus: Putative two-component response regulator-like APRR4 (292 aa).

The region spanning 43–158 (RVLVFDEDPS…DLRIVFKHLV (116 aa)) is the Response regulatory domain. The interval 168–215 (VTGEAEKAAGEKSSSVGDSTIRNPNKSKRSSCLEAEVNEEDRHDHNDR) is disordered. Polar residues predominate over residues 179–191 (KSSSVGDSTIRNP). The myb-like GARP DNA-binding region spans 225-275 (RVVWDEELHQNFLNAVDFLGLERAVPKKILDVMKVDYISRENVASHLQVTF).

It belongs to the ARR-like family. As to quaternary structure, binds the target DNA as a monomer.

The protein localises to the nucleus. In terms of biological role, transcriptional activator that binds specifically to the DNA sequence 5'-[AG]GATT-3'. The chain is Putative two-component response regulator-like APRR4 (APRR4) from Arabidopsis thaliana (Mouse-ear cress).